Consider the following 74-residue polypeptide: UPF0346 protein PEPE_1063 (74 aa).

Belongs to the UPF0346 family.

The protein is UPF0346 protein PEPE_1063 of Pediococcus pentosaceus (strain ATCC 25745 / CCUG 21536 / LMG 10740 / 183-1w).